The primary structure comprises 184 residues: MALLPILSYPDPRLRMIATPVKEVTAEIKTLITDMIETMYDAEGIGLAASQVDHHIQLIVMDLSEDKDSPRVFINPKVTPLVEEKQPYEEGCLSVPDVYDKVERPNKVRIEAIDQNGNAIDEEVEGLLAVCIQHEIDHLNGVIFVDYLSRLKQTRARDKVRKVLKIREKQGEQVAEKEPQPANS.

Residues C92 and H134 each contribute to the Fe cation site. Residue E135 is part of the active site. Fe cation is bound at residue H138.

It belongs to the polypeptide deformylase family. Fe(2+) serves as cofactor.

The catalysed reaction is N-terminal N-formyl-L-methionyl-[peptide] + H2O = N-terminal L-methionyl-[peptide] + formate. In terms of biological role, removes the formyl group from the N-terminal Met of newly synthesized proteins. Requires at least a dipeptide for an efficient rate of reaction. N-terminal L-methionine is a prerequisite for activity but the enzyme has broad specificity at other positions. This chain is Peptide deformylase, found in Psychrobacter arcticus (strain DSM 17307 / VKM B-2377 / 273-4).